The sequence spans 371 residues: tRNA-specific 2-thiouridylase MnmA (371 aa).

Residues 13–20 (GMSGGVDS) and Met-39 contribute to the ATP site. An interaction with target base in tRNA region spans residues 99-101 (NPD). The active-site Nucleophile is Cys-104. Residues Cys-104 and Cys-200 are joined by a disulfide bond. Gly-128 contributes to the ATP binding site. The segment at 150-152 (KDQ) is interaction with tRNA. Residue Cys-200 is the Cysteine persulfide intermediate of the active site. Residues 308 to 309 (RY) are interaction with tRNA.

It belongs to the MnmA/TRMU family.

The protein localises to the cytoplasm. The catalysed reaction is S-sulfanyl-L-cysteinyl-[protein] + uridine(34) in tRNA + AH2 + ATP = 2-thiouridine(34) in tRNA + L-cysteinyl-[protein] + A + AMP + diphosphate + H(+). Functionally, catalyzes the 2-thiolation of uridine at the wobble position (U34) of tRNA, leading to the formation of s(2)U34. The chain is tRNA-specific 2-thiouridylase MnmA from Listeria innocua serovar 6a (strain ATCC BAA-680 / CLIP 11262).